The sequence spans 310 residues: Very-long-chain enoyl-CoA reductase (310 aa).

Topologically, residues 1-85 (MPITIKSRSK…KDLGPQISWR (85 aa)) are cytoplasmic. The chain crosses the membrane as a helical span at residues 86–106 (LVFFCEYLGPVLVHSLFYYLS). Over 107-141 (TIPTVVDRWHSASSDYNPFLNRVAYFLILGHYGKR) the chain is Lumenal. A helical transmembrane segment spans residues 142–162 (LFETLFVHQFSLATMPIFNLF). The Cytoplasmic segment spans residues 163–165 (KNC). A helical transmembrane segment spans residues 166–186 (FHYWVLSGLISFGYFGYGFPF). Topologically, residues 187 to 201 (GNAKLFKYYSYLKLD) are lumenal. A helical transmembrane segment spans residues 202–222 (DLSTLIGLFVLSELWNFYCHI). Residues 223 to 242 (KLRLWGDYQKKHGNAKIRVP) are Cytoplasmic-facing. The helical transmembrane segment at 243–265 (LNQGIFNLFVAPNYTFEVWSWIW) threads the bilayer. The Lumenal portion of the chain corresponds to 266 to 268 (FTF). Residues 269–291 (VFKFNLFAVLFLTVSTAQMYAWA) form a helical membrane-spanning segment. Residues 292 to 310 (QKKNKKYHTRRAFLIPFVF) lie on the Cytoplasmic side of the membrane.

It belongs to the steroid 5-alpha reductase family. As to quaternary structure, interacts with the fatty acid elongation system components ELO2 and ELO3. Interacts with NVJ1.

It localises to the endoplasmic reticulum membrane. It carries out the reaction a very-long-chain 2,3-saturated fatty acyl-CoA + NADP(+) = a very-long-chain (2E)-enoyl-CoA + NADPH + H(+). It catalyses the reaction octadecanoyl-CoA + NADP(+) = (2E)-octadecenoyl-CoA + NADPH + H(+). The catalysed reaction is (2E)-eicosenoyl-CoA + NADPH + H(+) = eicosanoyl-CoA + NADP(+). The enzyme catalyses (2E)-docosenoyl-CoA + NADPH + H(+) = docosanoyl-CoA + NADP(+). It carries out the reaction (2E)-tetracosenoyl-CoA + NADPH + H(+) = tetracosanoyl-CoA + NADP(+). It catalyses the reaction (2E)-hexacosenoyl-CoA + NADPH + H(+) = hexacosanoyl-CoA + NADP(+). Its pathway is lipid metabolism; fatty acid biosynthesis. Functionally, catalyzes the last of the four reactions of the long-chain fatty acids elongation cycle. This endoplasmic reticulum-bound enzymatic process, allows the addition of 2 carbons to the chain of long- and very long-chain fatty acids/VLCFAs per cycle. This enzyme reduces the trans-2,3-enoyl-CoA fatty acid intermediate to an acyl-CoA that can be further elongated by entering a new cycle of elongation. Thereby, it participates in the production of VLCFAs of different chain lengths that are involved in multiple biological processes as precursors of membrane lipids and lipid mediators. VLCFAs serve for instance as precursors for ceramide and sphingolipids. Required for normal biogenesis of piecemeal microautophagy of the nucleus (PMN) bleps and vesicles during nutrient stress. This Saccharomyces cerevisiae (strain ATCC 204508 / S288c) (Baker's yeast) protein is Very-long-chain enoyl-CoA reductase (TSC13).